A 168-amino-acid chain; its full sequence is Protein C2-DOMAIN ABA-RELATED 1 (168 aa).

An N-acetylmethionine modification is found at methionine 1. The C2 domain occupies 1–104 (MENLVGLLRI…EAIKFAHQLG (104 aa)). Ca(2+)-binding residues include arginine 21, aspartate 22, aspartate 27, aspartate 73, tyrosine 74, aspartate 75, and aspartate 81.

The protein belongs to the plant CAR protein family. Dimers and oligomers. Binds to PYR/PYL/RCAR abscisic acid intracellular receptors in an ABA-independent manner, both at the plasma membrane and in the nucleus. Interacts directly with PYR1, PYL1, PYL4, PYL6 and PYL8. Binds phospholipids in a Ca(2+)-dependent manner. The cofactor is Ca(2+). In terms of tissue distribution, expressed in roots.

Its subcellular location is the cell membrane. It localises to the nucleus. In terms of biological role, stimulates the GTPase/ATPase activities of Obg-like ATPases. Mediates the transient calcium-dependent interaction of PYR/PYL/RCAR abscisic acid (ABA) receptors with the plasma membrane and thus regulates ABA sensitivity. Binds liposomes in the absence of exogenous Ca(2+), but this activity is enhanced in the presence of Ca(2+) and generates membrane curvature. This Arabidopsis thaliana (Mouse-ear cress) protein is Protein C2-DOMAIN ABA-RELATED 1.